The following is a 542-amino-acid chain: Importin subunit alpha (542 aa).

At M1 the chain carries N-acetylmethionine. A compositionally biased stretch (polar residues) spans M1 to K11. Residues M1–A65 enclose the IBB domain. The segment at M1 to A77 is disordered. The span at F27–A53 shows a compositional bias: basic and acidic residues. The ARM 1; truncated repeat unit spans residues L89–P122. 8 ARM repeats span residues I123–T162, S163–S204, T205–D251, W252–P288, Q289–N330, D331–N372, T373–R417, and P418–N471. An NLS binding site 1 region spans residues D209–Q335. The NLS binding site 2 stretch occupies residues D419–I505. The ARM 10; atypical repeat unit spans residues E472–Y508.

Belongs to the importin alpha family. Forms a complex with an importin beta subunit. In the nucleus, interacts with NUP2 which accelerate release of NLSs, NUP2 is subsequently displaced by CSE1:RanGTP which mediates re-export and recycling. Interacts with HEH2, SHE2, and STS1.

It is found in the cytoplasm. The protein resides in the perinuclear region. Functions in nuclear protein import as an adapter protein for importin beta nuclear receptors. Binds specifically and directly to substrates containing either a simple or bipartite NLS motif. Promotes docking of import substrates to the nuclear envelope. Together with importin beta KAP95, mediates nuclear import of transcription factor GCN4. Together with tethering factor STS1, targets the proteasome to the nucleus. This is Importin subunit alpha (SRP1) from Saccharomyces cerevisiae (strain ATCC 204508 / S288c) (Baker's yeast).